Here is a 120-residue protein sequence, read N- to C-terminus: Holo-[acyl-carrier-protein] synthase (120 aa).

Mg(2+)-binding residues include aspartate 8 and glutamate 58.

It belongs to the P-Pant transferase superfamily. AcpS family. Requires Mg(2+) as cofactor.

The protein localises to the cytoplasm. The enzyme catalyses apo-[ACP] + CoA = holo-[ACP] + adenosine 3',5'-bisphosphate + H(+). In terms of biological role, transfers the 4'-phosphopantetheine moiety from coenzyme A to a Ser of acyl-carrier-protein. In Streptococcus pneumoniae (strain Hungary19A-6), this protein is Holo-[acyl-carrier-protein] synthase.